The following is a 220-amino-acid chain: RNA-free ribonuclease P (220 aa).

It belongs to the HARP family.

The enzyme catalyses Endonucleolytic cleavage of RNA, removing 5'-extranucleotides from tRNA precursor.. Functionally, RNA-free RNase P that catalyzes the removal of the 5'-leader sequence from pre-tRNA to produce the mature 5'-terminus. This is RNA-free ribonuclease P from Methanothermobacter thermautotrophicus (strain ATCC 29096 / DSM 1053 / JCM 10044 / NBRC 100330 / Delta H) (Methanobacterium thermoautotrophicum).